The sequence spans 270 residues: 4-hydroxy-tetrahydrodipicolinate reductase (270 aa).

NAD(+) is bound by residues 8 to 13 (GALGRM), Asp34, 102 to 104 (GTT), and 128 to 131 (SQNY). The Proton donor/acceptor role is filled by His160. His161 provides a ligand contact to (S)-2,3,4,5-tetrahydrodipicolinate. Lys164 (proton donor) is an active-site residue. 170-171 (GT) contacts (S)-2,3,4,5-tetrahydrodipicolinate.

This sequence belongs to the DapB family.

It is found in the cytoplasm. The catalysed reaction is (S)-2,3,4,5-tetrahydrodipicolinate + NAD(+) + H2O = (2S,4S)-4-hydroxy-2,3,4,5-tetrahydrodipicolinate + NADH + H(+). The enzyme catalyses (S)-2,3,4,5-tetrahydrodipicolinate + NADP(+) + H2O = (2S,4S)-4-hydroxy-2,3,4,5-tetrahydrodipicolinate + NADPH + H(+). It participates in amino-acid biosynthesis; L-lysine biosynthesis via DAP pathway; (S)-tetrahydrodipicolinate from L-aspartate: step 4/4. Catalyzes the conversion of 4-hydroxy-tetrahydrodipicolinate (HTPA) to tetrahydrodipicolinate. The chain is 4-hydroxy-tetrahydrodipicolinate reductase from Methanococcus maripaludis (strain C7 / ATCC BAA-1331).